Reading from the N-terminus, the 334-residue chain is Sensor protein BceS (334 aa).

Topologically, residues 1-12 (MIKAFLIERRSW) are cytoplasmic. Residues 13-33 (IAAFLFQQALMLFIAFVDPSI) form a helical membrane-spanning segment. Ser34 is a topological domain (extracellular). The helical transmembrane segment at 35 to 55 (FGNVLYMVYLCILFFIIFLWF) threads the bilayer. The Cytoplasmic portion of the chain corresponds to 56–334 (RYRKETAFYK…RNQFEHVISV (279 aa)). A Histidine kinase domain is found at 121-326 (AWIHEVKTPL…VFTLTFPIRN (206 aa)). Phosphohistidine; by autocatalysis is present on His124.

Its subcellular location is the cell membrane. The enzyme catalyses ATP + protein L-histidine = ADP + protein N-phospho-L-histidine.. Functionally, member of the two-component regulatory system BceS/BceR involved in the regulation of bacitracin resistance. Activates BceR in response to extracellular bacitracin. The polypeptide is Sensor protein BceS (bceS) (Bacillus subtilis (strain 168)).